A 127-amino-acid polypeptide reads, in one-letter code: UPF0166 protein PYRAB06660 (127 aa).

It belongs to the UPF0166 family.

The sequence is that of UPF0166 protein PYRAB06660 from Pyrococcus abyssi (strain GE5 / Orsay).